Consider the following 188-residue polypeptide: Probable chorismate pyruvate-lyase (188 aa).

3 residues coordinate substrate: Arg-90, Leu-128, and Glu-175.

The protein belongs to the UbiC family.

Its subcellular location is the cytoplasm. It catalyses the reaction chorismate = 4-hydroxybenzoate + pyruvate. The protein operates within cofactor biosynthesis; ubiquinone biosynthesis. Its function is as follows. Removes the pyruvyl group from chorismate, with concomitant aromatization of the ring, to provide 4-hydroxybenzoate (4HB) for the ubiquinone pathway. The sequence is that of Probable chorismate pyruvate-lyase from Marinobacter nauticus (strain ATCC 700491 / DSM 11845 / VT8) (Marinobacter aquaeolei).